A 108-amino-acid chain; its full sequence is Tubulin-specific chaperone A (108 aa).

Alanine 2 is modified (N-acetylalanine).

This sequence belongs to the TBCA family. Supercomplex made of cofactors A to E. Cofactors A and D function by capturing and stabilizing tubulin in a quasi-native conformation. Cofactor E binds to the cofactor D-tubulin complex; interaction with cofactor C then causes the release of tubulin polypeptides that are committed to the native state. Widely expressed, but is most abundant in the testis.

It is found in the cytoplasm. The protein localises to the cytoskeleton. Functionally, tubulin-folding protein; involved in the early step of the tubulin folding pathway. This chain is Tubulin-specific chaperone A (TBCA), found in Bos taurus (Bovine).